A 291-amino-acid chain; its full sequence is Elongation factor Ts (291 aa).

The interval 79–82 (TDFV) is involved in Mg(2+) ion dislocation from EF-Tu.

It belongs to the EF-Ts family.

It is found in the cytoplasm. In terms of biological role, associates with the EF-Tu.GDP complex and induces the exchange of GDP to GTP. It remains bound to the aminoacyl-tRNA.EF-Tu.GTP complex up to the GTP hydrolysis stage on the ribosome. The sequence is that of Elongation factor Ts from Leuconostoc mesenteroides subsp. mesenteroides (strain ATCC 8293 / DSM 20343 / BCRC 11652 / CCM 1803 / JCM 6124 / NCDO 523 / NBRC 100496 / NCIMB 8023 / NCTC 12954 / NRRL B-1118 / 37Y).